The following is a 339-amino-acid chain: Bifunctional phosphoglucose/phosphomannose isomerase (339 aa).

The SIS domain maps to 22-164 (ISVNVKAEDI…IEPVDDQIEE (143 aa)). D-fructose 6-phosphate is bound by residues glycine 41, serine 42, serine 83, serine 85, threonine 88, and arginine 135. Glutamate 221 acts as the Proton acceptor in catalysis. Positions 237 and 331 each coordinate D-fructose 6-phosphate. Histidine 237 serves as the catalytic Proton donor. The Proton acceptor role is filled by lysine 331.

It belongs to the PGI/PMI family. Homodimer.

It carries out the reaction alpha-D-glucose 6-phosphate = beta-D-fructose 6-phosphate. The catalysed reaction is D-mannose 6-phosphate = D-fructose 6-phosphate. Functionally, dual specificity isomerase that catalyzes the isomerization of both glucose-6-phosphate and mannose-6-phosphate to fructose-6-phosphate. The protein is Bifunctional phosphoglucose/phosphomannose isomerase of Caldicellulosiruptor bescii (strain ATCC BAA-1888 / DSM 6725 / KCTC 15123 / Z-1320) (Anaerocellum thermophilum).